The sequence spans 86 residues: Neurotoxin 8-related gene product 1/2/3 (86 aa).

Residues 1–19 (MNYLTMISLALLVMTGVES) form the signal peptide. In terms of domain architecture, LCN-type CS-alpha/beta spans 22-84 (RDAYIADNKN…VPIKVPGKCN (63 aa)). Disulfide bonds link Cys-32–Cys-83, Cys-36–Cys-56, Cys-42–Cys-66, and Cys-46–Cys-68. Asn-84 carries the post-translational modification Asparagine amide.

Belongs to the long (4 C-C) scorpion toxin superfamily. Sodium channel inhibitor family. Alpha subfamily. In terms of tissue distribution, expressed by the venom gland.

Its subcellular location is the secreted. In terms of biological role, binds voltage-dependently at site-3 of sodium channels (Nav) and inhibits the inactivation of the activated channels, thereby blocking neuronal transmission. In Androctonus mauritanicus mauritanicus (Scorpion), this protein is Neurotoxin 8-related gene product 1/2/3 (NTVIIIrgp1).